The primary structure comprises 1115 residues: MTTPVSLSQVEKKTIESILTNKKEEGKLITKVTILNEKKKKLEIKTLILSSNRIFLFTDSKGKLSAEHHYLEITEIASQSENDVTIKFKNQNVMKMNLDASEVLKTLYGTLMSTFPGIKIGKTIIFNITPASRIPSIFQATSFKDIQGCGSFNLTYRSVCDHLGVQPLSSILWDIENLYPFNQVREFNLAEIYQYSFTDLKAILLSLSYNTYFQSFQSNGKLSNEDLNLLAEVFKENSSLQQLTITNSQASKEPIITLLQNVAENKALHLSHINLNNNSLENKGILTLGSSIQTFSNGLTYLNIENTSCSGKGLEAMFGCLTANNVVCGSMTHLNISNNKLESYGTNGLCKFLSKATALQQLLMSNTSPVYSFLKTSSSSIQTLDFSGNKSTTTKESVIDILSFFKQMSHLQTVNLSRIQTTPDDLKLLFSPATSLLKCSSVDLSENDLGDGGIIKLCEIMYPNSNLHHLSIDGNFKTKSKLRARAIEALINLIDDNTSIESLSLASGSGKYQLKGDLMPLLLSLLKNQSLVKLDISGNGVGDSGALAVSKILWKNQTLKSLKCDGNDFSYTALKMIKCSIRRNEKSLTILQLPLSDISTILKNDSNGSSHEKILKTIQDIQTSIVINYPNNIHPIDTSSGGLTPTKQPSIGSLAGVIKKPPIGPPSTPTKSSNPGFQTLPKRPTRGPLYPGRATGGAVTLTDKAQINASTIELPPLVSRSIDLLMEQGISSVGIFRTCASATALKKIKTRFEAGEDIDLKAENVDVDTVAGVLKSYFRELPNPIFPENLHEYFFQAMRQSSNEEIIQSLKDIIDQLSPLECKMIKKLFHLLHLISLEKDVNMMSPENIAICWAPTFFRSFASELLPINSFMIVNYFDIFDPENKPISSDNSGDADTDSTQSTCTTNNNNLVATSLSSPISPSTTPTKSIDNVLHTTVEVSRSPNHERAHTVGPMTSKRPISNNNGVSSNTPPLPNNVTPHHNTMPSRPSASPIKRPPSMGGSLSNFAGIPLSNHSSSGQLNNNNSNNNTTSNSSNSSSGKSSSNPSPIPTPPDSPSMSYIGDGKSTLRSKRFSRVNRVSYSPVLPRAWTNESRTVSSLFQDDLDSNSDSSGPSL.

The segment at 661-691 is disordered; it reads PPIGPPSTPTKSSNPGFQTLPKRPTRGPLYP. One can recognise a Rho-GAP domain in the interval 699 to 880; it reads VTLTDKAQIN…FMIVNYFDIF (182 aa). Disordered stretches follow at residues 888-1065 and 1092-1115; these read SSDN…GDGK and ESRT…GPSL. Positions 898–929 are enriched in low complexity; sequence DSTQSTCTTNNNNLVATSLSSPISPSTTPTKS. 2 stretches are compositionally biased toward polar residues: residues 934-943 and 959-990; these read LHTTVEVSRS and RPIS…SRPS. Over residues 1013–1046 the composition is skewed to low complexity; that stretch reads SNHSSSGQLNNNNSNNNTTSNSSNSSSGKSSSNP.

Its subcellular location is the cytoplasm. Its function is as follows. Rho GTPase-activating protein involved in the signal transduction pathway. The protein is Rho GTPase-activating protein gacW (gacW) of Dictyostelium discoideum (Social amoeba).